The sequence spans 252 residues: Protein Flattop homolog (252 aa).

A disordered region spans residues 177-252; it reads TEKRRRKRTI…EKERKAAKGH (76 aa). Positions 218–252 are enriched in basic and acidic residues; it reads PKDKPKDKPKDKEAGKKDKTKDKGKEKERKAAKGH.

The protein belongs to the Flattop family.

In Drosophila melanogaster (Fruit fly), this protein is Protein Flattop homolog.